A 417-amino-acid polypeptide reads, in one-letter code: Tryptophan synthase beta chain (417 aa).

The residue at position 99 (K99) is an N6-(pyridoxal phosphate)lysine.

It belongs to the TrpB family. In terms of assembly, tetramer of two alpha and two beta chains. The cofactor is pyridoxal 5'-phosphate.

The catalysed reaction is (1S,2R)-1-C-(indol-3-yl)glycerol 3-phosphate + L-serine = D-glyceraldehyde 3-phosphate + L-tryptophan + H2O. Its pathway is amino-acid biosynthesis; L-tryptophan biosynthesis; L-tryptophan from chorismate: step 5/5. The beta subunit is responsible for the synthesis of L-tryptophan from indole and L-serine. In Corynebacterium glutamicum (strain ATCC 13032 / DSM 20300 / JCM 1318 / BCRC 11384 / CCUG 27702 / LMG 3730 / NBRC 12168 / NCIMB 10025 / NRRL B-2784 / 534), this protein is Tryptophan synthase beta chain (trpB).